The primary structure comprises 31 residues: Scolopendra 20566.01 Da toxin (31 aa).

The protein belongs to the CRISP family. Venom allergen 5-like subfamily. Contains 3 disulfide bonds. In terms of tissue distribution, expressed by the venom gland.

It localises to the secreted. This is Scolopendra 20566.01 Da toxin from Scolopendra angulata (Barbados giant red centipede).